A 297-amino-acid chain; its full sequence is MSSPFQQILTTTSATNAIAASSAVPVECLHARGANSLASNAHTVLPGLDSQASPQSGQKEEMRRKNAEAQMQNDSNHSETTLFQSDLDTALQSLGYGSQTNQAYQNHPSRSREDITNSRAERHSQTSTQPKNVHAVSEPMATTSLDCGVLPLPSSALDEEFLNLDFPNQERIYIDLEPQHSNSTSSSSDEKCHCLSHIIQSLNRNRQGNHIRRDSMNKIHLLNEAAEQFLMCDSNHSKLWYIILLALYQDADDSLSSAEEPQERMGAHSGAKGFCGNIKSNLDTMVCHASLAWILNG.

Disordered regions lie at residues 45 to 80 (LPGLDSQASPQSGQKEEMRRKNAEAQMQNDSNHSET) and 100 to 134 (TNQAYQNHPSRSREDITNSRAERHSQTSTQPKNVH). Residues 58–67 (QKEEMRRKNA) show a composition bias toward basic and acidic residues. The segment covering 69 to 80 (AQMQNDSNHSET) has biased composition (polar residues). Over residues 110–124 (RSREDITNSRAERHS) the composition is skewed to basic and acidic residues.

The protein localises to the nucleus. Its function is as follows. Probable transcription factor; part of the gene cluster that mediates the biosynthesis of the secondary metabolite victorin, the molecular basis for Victoria blight of oats. May play a role in the regulation of the production of victorin. This is Probable transcription factor vicR from Bipolaris victoriae (strain FI3) (Victoria blight of oats agent).